Consider the following 384-residue polypeptide: 1-deoxy-D-xylulose 5-phosphate reductoisomerase (384 aa).

Residues Thr10, Gly11, Ser12, Ile13, Asn38, and Asn120 each contribute to the NADPH site. Residue Lys121 participates in 1-deoxy-D-xylulose 5-phosphate binding. An NADPH-binding site is contributed by Glu122. Asp146 provides a ligand contact to Mn(2+). 1-deoxy-D-xylulose 5-phosphate-binding residues include Ser147, Glu148, Ser172, and His195. Glu148 contributes to the Mn(2+) binding site. Gly201 is a binding site for NADPH. 1-deoxy-D-xylulose 5-phosphate contacts are provided by Ser208, Asn213, Lys214, and Glu217. Glu217 contributes to the Mn(2+) binding site.

The protein belongs to the DXR family. The cofactor is Mg(2+). Mn(2+) serves as cofactor.

The enzyme catalyses 2-C-methyl-D-erythritol 4-phosphate + NADP(+) = 1-deoxy-D-xylulose 5-phosphate + NADPH + H(+). It participates in isoprenoid biosynthesis; isopentenyl diphosphate biosynthesis via DXP pathway; isopentenyl diphosphate from 1-deoxy-D-xylulose 5-phosphate: step 1/6. In terms of biological role, catalyzes the NADPH-dependent rearrangement and reduction of 1-deoxy-D-xylulose-5-phosphate (DXP) to 2-C-methyl-D-erythritol 4-phosphate (MEP). In Protochlamydia amoebophila (strain UWE25), this protein is 1-deoxy-D-xylulose 5-phosphate reductoisomerase.